We begin with the raw amino-acid sequence, 309 residues long: tRNA pseudouridine synthase B (309 aa).

Aspartate 52 (nucleophile) is an active-site residue.

Belongs to the pseudouridine synthase TruB family. Type 1 subfamily.

The catalysed reaction is uridine(55) in tRNA = pseudouridine(55) in tRNA. Its function is as follows. Responsible for synthesis of pseudouridine from uracil-55 in the psi GC loop of transfer RNAs. The sequence is that of tRNA pseudouridine synthase B from Leptospira interrogans serogroup Icterohaemorrhagiae serovar Lai (strain 56601).